Reading from the N-terminus, the 207-residue chain is DNA-directed RNA polymerase subunit alpha (207 aa).

It belongs to the RNA polymerase alpha chain family. In terms of assembly, in plastids the minimal PEP RNA polymerase catalytic core is composed of four subunits: alpha, beta, beta', and beta''. When a (nuclear-encoded) sigma factor is associated with the core the holoenzyme is formed, which can initiate transcription.

The protein resides in the plastid. It is found in the chloroplast. It carries out the reaction RNA(n) + a ribonucleoside 5'-triphosphate = RNA(n+1) + diphosphate. Functionally, DNA-dependent RNA polymerase catalyzes the transcription of DNA into RNA using the four ribonucleoside triphosphates as substrates. The polypeptide is DNA-directed RNA polymerase subunit alpha (rpoA) (Euglena anabaena (Euglenaria anabaena)).